The chain runs to 357 residues: DNA replication and repair protein RecF (357 aa).

30 to 37 lines the ATP pocket; sequence GANGSGKT.

Belongs to the RecF family.

The protein localises to the cytoplasm. Functionally, the RecF protein is involved in DNA metabolism; it is required for DNA replication and normal SOS inducibility. RecF binds preferentially to single-stranded, linear DNA. It also seems to bind ATP. This chain is DNA replication and repair protein RecF, found in Klebsiella pneumoniae subsp. pneumoniae (strain ATCC 700721 / MGH 78578).